A 415-amino-acid chain; its full sequence is Heterogeneous nuclear ribonucleoprotein F (415 aa).

Met1 carries the post-translational modification N-acetylmethionine. Position 2 is an N-acetylmethionine; in Heterogeneous nuclear ribonucleoprotein F, N-terminally processed (Met2). The region spanning 11-90 (YVVKLRGLPW…RYIEVFKSHR (80 aa)) is the RRM 1 domain. A Glycyl lysine isopeptide (Lys-Gly) (interchain with G-Cter in SUMO) cross-link involves residue Lys72. The tract at residues 81–86 (RYIEVF) is interaction with RNA. Lys87 participates in a covalent cross-link: Glycyl lysine isopeptide (Lys-Gly) (interchain with G-Cter in SUMO2). 3 positions are modified to phosphoserine: Ser104, Ser107, and Ser161. The 78-residue stretch at 111–188 (GFVRLRGLPF…RYIEVFKSSQ (78 aa)) folds into the RRM 2 domain. Residue Lys167 forms a Glycyl lysine isopeptide (Lys-Gly) (interchain with G-Cter in SUMO2) linkage. The segment at 179–184 (RYIEVF) is interaction with RNA. Residue Lys185 forms a Glycyl lysine isopeptide (Lys-Gly) (interchain with G-Cter in SUMO2) linkage. 3 positions are modified to phosphoserine: Ser187, Ser193, and Ser195. Lys200 is subject to N6-acetyllysine; alternate. Lys200 is covalently cross-linked (Glycyl lysine isopeptide (Lys-Gly) (interchain with G-Cter in SUMO2); alternate). Residue Thr215 is modified to Phosphothreonine. At Lys224 the chain carries N6-acetyllysine; alternate. Lys224 participates in a covalent cross-link: Glycyl lysine isopeptide (Lys-Gly) (interchain with G-Cter in SUMO2); alternate. Phosphoserine is present on Ser265. An RRM 3 domain is found at 289–366 (HCVHMRGLPY…IELFLNSTTG (78 aa)). The tract at residues 355–360 (RYIELF) is interaction with RNA.

In terms of assembly, identified in the spliceosome C complex. Interacts with AGO1, AGO2, TBP and TXNL4/DIM1. Post-translationally, sumoylated.

It localises to the nucleus. It is found in the nucleoplasm. In terms of biological role, component of the heterogeneous nuclear ribonucleoprotein (hnRNP) complexes which provide the substrate for the processing events that pre-mRNAs undergo before becoming functional, translatable mRNAs in the cytoplasm. Plays a role in the regulation of alternative splicing events. Binds G-rich sequences in pre-mRNAs and keeps target RNA in an unfolded state. This Mus musculus (Mouse) protein is Heterogeneous nuclear ribonucleoprotein F (Hnrnpf).